The sequence spans 371 residues: Outer membrane protein P2 (371 aa).

The signal sequence occupies residues 1-20 (MKKTLAALIVGAFAASAANA).

Belongs to the Gram-negative porin family. Homotrimer.

It is found in the cell outer membrane. Functionally, forms pores that allow passive diffusion of small molecules across the outer membrane. The sequence is that of Outer membrane protein P2 (ompP2) from Haemophilus influenzae.